Consider the following 31-residue polypeptide: Cytochrome b6-f complex subunit 6 (31 aa).

A helical membrane pass occupies residues Ile-4–Gly-24.

This sequence belongs to the PetL family. As to quaternary structure, the 4 large subunits of the cytochrome b6-f complex are cytochrome b6, subunit IV (17 kDa polypeptide, PetD), cytochrome f and the Rieske protein, while the 4 small subunits are PetG, PetL, PetM and PetN. The complex functions as a dimer.

It localises to the plastid. The protein resides in the chloroplast thylakoid membrane. In terms of biological role, component of the cytochrome b6-f complex, which mediates electron transfer between photosystem II (PSII) and photosystem I (PSI), cyclic electron flow around PSI, and state transitions. PetL is important for photoautotrophic growth as well as for electron transfer efficiency and stability of the cytochrome b6-f complex. This chain is Cytochrome b6-f complex subunit 6, found in Magnolia grandiflora (Southern magnolia).